We begin with the raw amino-acid sequence, 166 residues long: SUMO-conjugating enzyme UBC9 (166 aa).

Positions 4–157 constitute a UBC core domain; the sequence is IAAGRLAEER…VKKEAVKYAA (154 aa). Cysteine 93 (glycyl thioester intermediate) is an active-site residue.

It belongs to the ubiquitin-conjugating enzyme family. Interacts with brd-1 and rad-51. Interacts with smo-1 and sop-2. Interacts with bet-1 (via BROMO domain 2). Interacts with isoforms 1 and 2 of X-box-binding protein xbp-1.

The protein localises to the nucleus envelope. Its pathway is protein modification; protein sumoylation. Functionally, accepts the ubiquitin-like protein smo-1 from the aos-1-uba-2 E1 complex and catalyzes its covalent attachment to other proteins with the help of an E3 ligase such as gei-17. Required to sumoylate the ETS transcription factor lin-1, Polycomb protein sop-2, and intermediate filament proteins, such as ifb-1. Required for embryonic development, fertility, vulval morphogenesis, inhibition of vulval cell fates, lifespan, and neuromuscular activity. This Caenorhabditis elegans protein is SUMO-conjugating enzyme UBC9.